A 519-amino-acid chain; its full sequence is Demethylepipodophyllotoxin synthase (519 aa).

Residues 6 to 26 (CLETLLLGFFVLLPCFFYFVW) traverse the membrane as a helical segment. C458 provides a ligand contact to heme.

This sequence belongs to the cytochrome P450 family. Heme serves as cofactor. Rhizome-specific expression.

Its subcellular location is the membrane. The enzyme catalyses (-)-4'-desmethyl-deoxypodophyllotoxin + reduced [NADPH--hemoprotein reductase] + O2 = 4'-demethylepipodophyllotoxin + oxidized [NADPH--hemoprotein reductase] + H2O + H(+). It participates in aromatic compound metabolism; phenylpropanoid biosynthesis. In terms of biological role, cytochrome P450 involved in the biosynthesis of etoposide, a chemotherapeutic compound of the topoisomerase inhibitor family. Catalyzes the hydroxylation of deoxypodophyllotoxin to form epipodophyllotoxin. This is Demethylepipodophyllotoxin synthase from Sinopodophyllum hexandrum (Himalayan may apple).